Here is a 140-residue protein sequence, read N- to C-terminus: Sperm protein associated with the nucleus on the X chromosome N3 (140 aa).

Composition is skewed to polar residues over residues 1 to 20 (MEQP…CKSN), 62 to 79 (INSN…SINP), and 131 to 140 (EGSSQDSGED). A disordered region spans residues 1–140 (MEQPTSSTNG…EGSSQDSGED (140 aa)).

It belongs to the SPAN-X family.

The chain is Sperm protein associated with the nucleus on the X chromosome N3 (SPANXN3) from Pan troglodytes (Chimpanzee).